A 249-amino-acid chain; its full sequence is Triosephosphate isomerase (249 aa).

9–11 (NWK) serves as a coordination point for substrate. Histidine 95 serves as the catalytic Electrophile. Glutamate 167 functions as the Proton acceptor in the catalytic mechanism. Substrate is bound by residues glycine 173, serine 213, and 234 to 235 (GG).

This sequence belongs to the triosephosphate isomerase family. In terms of assembly, homodimer.

Its subcellular location is the cytoplasm. It carries out the reaction D-glyceraldehyde 3-phosphate = dihydroxyacetone phosphate. Its pathway is carbohydrate biosynthesis; gluconeogenesis. The protein operates within carbohydrate degradation; glycolysis; D-glyceraldehyde 3-phosphate from glycerone phosphate: step 1/1. Its function is as follows. Involved in the gluconeogenesis. Catalyzes stereospecifically the conversion of dihydroxyacetone phosphate (DHAP) to D-glyceraldehyde-3-phosphate (G3P). In Dictyoglomus thermophilum (strain ATCC 35947 / DSM 3960 / H-6-12), this protein is Triosephosphate isomerase.